A 331-amino-acid chain; its full sequence is Glycerol-3-phosphate dehydrogenase [NAD(P)+] (331 aa).

NADPH is bound by residues Trp-11 and Lys-101. Sn-glycerol 3-phosphate is bound by residues Lys-101, Gly-132, and Ser-134. Ala-136 provides a ligand contact to NADPH. Positions 188, 241, 251, 252, and 253 each coordinate sn-glycerol 3-phosphate. Lys-188 (proton acceptor) is an active-site residue. Position 252 (Arg-252) interacts with NADPH. Position 278 (Glu-278) interacts with NADPH.

It belongs to the NAD-dependent glycerol-3-phosphate dehydrogenase family.

It is found in the cytoplasm. It catalyses the reaction sn-glycerol 3-phosphate + NAD(+) = dihydroxyacetone phosphate + NADH + H(+). The enzyme catalyses sn-glycerol 3-phosphate + NADP(+) = dihydroxyacetone phosphate + NADPH + H(+). Its pathway is membrane lipid metabolism; glycerophospholipid metabolism. In terms of biological role, catalyzes the reduction of the glycolytic intermediate dihydroxyacetone phosphate (DHAP) to sn-glycerol 3-phosphate (G3P), the key precursor for phospholipid synthesis. The chain is Glycerol-3-phosphate dehydrogenase [NAD(P)+] from Phytoplasma mali (strain AT).